Reading from the N-terminus, the 326-residue chain is Polycomb complex protein BMI-1 (326 aa).

Residues 18 to 57 (CVLCGGYFIDATTIIECLHSFCKTCIVRYLETSKYCPICD) form an RING-type zinc finger. Positions 81-95 (KLVPGLFKNEMKRRR) match the Nuclear localization signal motif. Residues 162–182 (RYLRCPAAMTVMHLRKFLRSK) are interaction with PHC2. The interaction with E4F1 stretch occupies residues 164-228 (LRCPAAMTVM…GPLPLKYRVR (65 aa)). The disordered stretch occupies residues 236–326 (IGHQREGLSN…INGSSATSSG (91 aa)). The span at 265–278 (LPSTSSCLPSPSTP) shows a compositional bias: low complexity. Over residues 279–310 (VQSPHPQFPHISSTMNGTSSSPGSNHQSSFTN) the composition is skewed to polar residues. Over residues 315–326 (SSINGSSATSSG) the composition is skewed to low complexity.

In terms of assembly, component of a PRC1-like complex.

Its subcellular location is the nucleus. The protein resides in the cytoplasm. Component of a Polycomb group (PcG) multiprotein PRC1-like complex, a complex class required to maintain the transcriptionally repressive state of many genes, including Hox genes, throughout development. PcG PRC1 complex acts via chromatin remodeling and modification of histones; it mediates monoubiquitination of histone H2A 'Lys-119', rendering chromatin heritably changed in its expressibility. In the PRC1-like complex, regulates the E3 ubiquitin-protein ligase activity of RNF2/RING2. This Gallus gallus (Chicken) protein is Polycomb complex protein BMI-1 (BMI1).